The sequence spans 326 residues: Phenylalanine--tRNA ligase alpha subunit (326 aa).

Residue glutamate 251 coordinates Mg(2+).

The protein belongs to the class-II aminoacyl-tRNA synthetase family. Phe-tRNA synthetase alpha subunit type 1 subfamily. Tetramer of two alpha and two beta subunits. Mg(2+) is required as a cofactor.

Its subcellular location is the cytoplasm. The catalysed reaction is tRNA(Phe) + L-phenylalanine + ATP = L-phenylalanyl-tRNA(Phe) + AMP + diphosphate + H(+). The polypeptide is Phenylalanine--tRNA ligase alpha subunit (Pseudoalteromonas atlantica (strain T6c / ATCC BAA-1087)).